The chain runs to 835 residues: Adhesion G protein-coupled receptor E5 (835 aa).

The N-terminal stretch at methionine 1–threonine 20 is a signal peptide. The Extracellular segment spans residues glutamine 21–arginine 552. Residues aspartate 22–aspartate 63 enclose the EGF-like 1 domain. 15 disulfide bridges follow: cysteine 26–cysteine 36, cysteine 30–cysteine 42, cysteine 44–cysteine 62, cysteine 68–cysteine 82, cysteine 76–cysteine 91, cysteine 93–cysteine 114, cysteine 120–cysteine 133, cysteine 127–cysteine 142, cysteine 144–cysteine 158, cysteine 164–cysteine 177, cysteine 171–cysteine 186, cysteine 188–cysteine 207, cysteine 213–cysteine 226, cysteine 220–cysteine 235, and cysteine 237–cysteine 256. N-linked (GlcNAc...) asparagine glycans are attached at residues asparagine 33 and asparagine 38. An EGF-like 2; calcium-binding domain is found at aspartate 64–glutamine 115. An N-linked (GlcNAc...) asparagine glycan is attached at asparagine 108. An EGF-like 3; calcium-binding domain is found at aspartate 116–threonine 159. The EGF-like 4; calcium-binding domain maps to aspartate 160–glutamate 208. Asparagine 203 is a glycosylation site (N-linked (GlcNAc...) asparagine). Residues aspartate 209 to glutamate 257 form the EGF-like 5; calcium-binding domain. A GAIN-B domain is found at proline 349–glutamate 543. N-linked (GlcNAc...) asparagine glycosylation is found at asparagine 371, asparagine 406, asparagine 413, asparagine 453, and asparagine 520. Cystine bridges form between cysteine 495–cysteine 525 and cysteine 513–cysteine 527. The interval cysteine 495–glutamate 543 is GPS. The chain crosses the membrane as a helical span at residues valine 553–valine 572. Residues arginine 573–threonine 581 lie on the Cytoplasmic side of the membrane. Residues isoleucine 582 to isoleucine 601 form a helical membrane-spanning segment. Residues glutamate 602–histidine 620 lie on the Extracellular side of the membrane. The chain crosses the membrane as a helical span at residues tyrosine 621 to valine 642. The Cytoplasmic segment spans residues arginine 643 to arginine 653. Residues tryptophan 654–tyrosine 674 traverse the membrane as a helical segment. Residues serine 675–glycine 691 lie on the Extracellular side of the membrane. A helical transmembrane segment spans residues phenylalanine 692–valine 712. Residues threonine 713–threonine 739 are Cytoplasmic-facing. Residues isoleucine 740–phenylalanine 760 traverse the membrane as a helical segment. Over aspartate 761–valine 766 the chain is Extracellular. The helical transmembrane segment at leucine 767 to leucine 789 threads the bilayer. The Cytoplasmic segment spans residues asparagine 790 to isoleucine 835. The span at threonine 814 to arginine 826 shows a compositional bias: polar residues. The segment at threonine 814 to isoleucine 835 is disordered. Serine 815 is modified (phosphoserine). Residue threonine 816 is modified to Phosphothreonine. At serine 818 the chain carries Phosphoserine. Residue threonine 825 is modified to Phosphothreonine. Phosphoserine occurs at positions 831 and 833.

This sequence belongs to the G-protein coupled receptor 2 family. LN-TM7 subfamily. In terms of assembly, forms a heterodimer, consisting of a large extracellular region (alpha subunit) non-covalently linked to a seven-transmembrane moiety (beta subunit). Interacts with complement decay-accelerating factor (DAF). The largest isoform (isoform 1) interacts with chondroitin sulfate. Post-translationally, proteolytically cleaved into 2 subunits, an extracellular alpha subunit and a seven-transmembrane subunit. Broadly expressed, found on most hematopoietic cells, including activated lymphocytes, monocytes, macrophages, dendritic cells, and granulocytes. Expressed also abundantly by smooth muscle cells. Expressed in thyroid, colorectal, gastric, esophageal and pancreatic carcinomas too. Expression are increased under inflammatory conditions in the CNS of multiple sclerosis and in synovial tissue of patients with rheumatoid arthritis. Increased expression of CD97 in the synovium is accompanied by detectable levels of soluble CD97 in the synovial fluid.

The protein resides in the cell membrane. It is found in the secreted. The protein localises to the extracellular space. Receptor potentially involved in both adhesion and signaling processes early after leukocyte activation. Plays an essential role in leukocyte migration. In Homo sapiens (Human), this protein is Adhesion G protein-coupled receptor E5.